The sequence spans 125 residues: uncharacterized protein (125 aa).

Residues 1-21 (MLFYHCSSFSSSSSSSSSSAS) form a disordered region. Low complexity predominate over residues 7–21 (SSFSSSSSSSSSSAS).

This is an uncharacterized protein from Saccharomyces cerevisiae (strain ATCC 204508 / S288c) (Baker's yeast).